The following is a 263-amino-acid chain: Small ribosomal subunit protein eS4 (263 aa).

Residues 42–104 (LPLIIFLRNR…TGENFRLIYD (63 aa)) form the S4 RNA-binding domain.

Belongs to the eukaryotic ribosomal protein eS4 family.

The sequence is that of Small ribosomal subunit protein eS4 (RPS4) from Cricetulus griseus (Chinese hamster).